A 104-amino-acid chain; its full sequence is Small ribosomal subunit protein uS10 (104 aa).

The protein belongs to the universal ribosomal protein uS10 family. Part of the 30S ribosomal subunit.

In terms of biological role, involved in the binding of tRNA to the ribosomes. In Aquifex aeolicus (strain VF5), this protein is Small ribosomal subunit protein uS10.